The sequence spans 1368 residues: Cingulin (1368 aa).

The tract at residues Met-9–Phe-378 is interaction with TJP3/ZO3 and myosin. The segment at Met-9–Pro-435 is head. The ZIM signature appears at Gln-41–Gly-55. Disordered stretches follow at residues Phe-71–Leu-264, Gly-278–Asp-312, Ser-1053–Arg-1080, Asn-1163–Gly-1183, and Gln-1308–Cys-1368. Positions Asn-83–Ser-97 are enriched in polar residues. The segment at Gly-101–Glu-294 is interaction with F-actin. Composition is skewed to low complexity over residues Pro-116 to Ala-132 and Ser-200 to Ser-211. The interaction with TJP2/ZO2 stretch occupies residues Ser-150–Arg-295. The span at Ser-228–Asn-256 shows a compositional bias: polar residues. The span at Ala-290–Asp-312 shows a compositional bias: basic and acidic residues. Residues Glu-377 to Cys-1368 form an interaction with myosin region. Residues Gly-436–Pro-1330 adopt a coiled-coil conformation. A compositionally biased stretch (basic and acidic residues) spans Lys-1320–Asp-1338. The segment at Ile-1331 to Cys-1368 is tail. A compositionally biased stretch (polar residues) spans Ser-1352–Cys-1368.

It belongs to the cingulin family. As to quaternary structure, parallel homodimer. Interacts with TJP1/ZO1 and TJP2/ZO2 in vivo, and TJP3/ZO3, myosin and OCLN in vitro, possibly directly. Acts as an F-actin bundling protein in vitro. In terms of tissue distribution, localized on the cytoplasmic face of tight junctions of polarized epithelia and some endothelia.

Its subcellular location is the cell junction. It is found in the tight junction. In terms of biological role, probably plays a role in the formation and regulation of the tight junction (TJ) paracellular permeability barrier, possibly by linking ZO proteins to the actomyosin cytoskeleton. This is Cingulin from Xenopus laevis (African clawed frog).